Here is a 90-residue protein sequence, read N- to C-terminus: Secretory calcium-binding phosphoprotein proline-glutamine-rich 1 (90 aa).

Residues 1–15 (MQLFLLAALLSAAAA) form the signal peptide.

In terms of tissue distribution, expressed in enamel organ.

It is found in the secreted. Functionally, tooth-associated epithelia protein that may participate in structuring the basal lamina at cell-tooth interface. The protein is Secretory calcium-binding phosphoprotein proline-glutamine-rich 1 of Mus musculus (Mouse).